A 128-amino-acid polypeptide reads, in one-letter code: Transmembrane protein 234 homolog (128 aa).

4 helical membrane-spanning segments follow: residues 3–23 (TYNI…NPLI), 53–73 (PSYT…FYTL), 80–100 (LVVP…GMLL), and 104–124 (VLHF…TICV).

It belongs to the TMEM234 family.

It is found in the membrane. The polypeptide is Transmembrane protein 234 homolog (Dictyostelium discoideum (Social amoeba)).